Here is a 226-residue protein sequence, read N- to C-terminus: CRISPR-associated endonuclease Cas3-HD (226 aa).

Positions 9–204 (GRDCLQTYED…HVLTVCDNWG (196 aa)) constitute an HD Cas3-type domain. 4 residues coordinate Mg(2+): Asp-56, His-74, His-101, and His-102.

It belongs to the CRISPR-associated nuclease Cas3-HD family. As to quaternary structure, monomer. Can form a Cascade complex with Csa5, Cas7, Cas5a, Cas3 and Cas8a2. Mg(2+) serves as cofactor.

Functionally, CRISPR (clustered regularly interspaced short palindromic repeat), is an adaptive immune system that provides protection against mobile genetic elements (viruses, transposable elements and conjugative plasmids). CRISPR clusters contain sequences complementary to antecedent mobile elements and target invading nucleic acids. CRISPR clusters are transcribed and processed into CRISPR RNA (crRNA). Cas3 plus Cascade participate in CRISPR interference, the third stage of CRISPR immunity. Acts as a ssDNA and ssRNA nuclease, probably with both exo- and endonuclease activities. Activity is higher for DNA than RNA. This is CRISPR-associated endonuclease Cas3-HD (cas3') from Thermoproteus tenax (strain ATCC 35583 / DSM 2078 / JCM 9277 / NBRC 100435 / Kra 1).